We begin with the raw amino-acid sequence, 541 residues long: Beta-hexosaminidase subunit A2 (541 aa).

Residues 1-21 form the signal peptide; sequence MINKFLTIFLIFSIVIIKVLS. Residue Glu314 is the Proton donor of the active site. N-linked (GlcNAc...) asparagine glycosylation is found at Asn322, Asn336, Asn356, Asn435, and Asn483.

The protein belongs to the glycosyl hydrolase 20 family.

The protein resides in the lysosome. It carries out the reaction Hydrolysis of terminal non-reducing N-acetyl-D-hexosamine residues in N-acetyl-beta-D-hexosaminides.. Its function is as follows. Responsible for the degradation of GM2 gangliosides, and a variety of other molecules containing terminal N-acetyl hexosamines. This chain is Beta-hexosaminidase subunit A2 (hexa2), found in Dictyostelium discoideum (Social amoeba).